A 435-amino-acid polypeptide reads, in one-letter code: GTPase Der (435 aa).

2 EngA-type G domains span residues 4–167 (PTLA…PSED) and 175–350 (IKFS…ENQT). Residues 10–17 (GRPNVGKS), 57–61 (DTGGI), 119–122 (NKVD), 181–188 (GRPNVGKS), 228–232 (DTAGI), and 293–296 (NKWD) each bind GTP. The 85-residue stretch at 351–435 (RRIQSSVLND…PIHIIARKRK (85 aa)) folds into the KH-like domain.

It belongs to the TRAFAC class TrmE-Era-EngA-EngB-Septin-like GTPase superfamily. EngA (Der) GTPase family. As to quaternary structure, associates with the 50S ribosomal subunit.

In terms of biological role, GTPase that plays an essential role in the late steps of ribosome biogenesis. This is GTPase Der from Lacticaseibacillus paracasei (strain ATCC 334 / BCRC 17002 / CCUG 31169 / CIP 107868 / KCTC 3260 / NRRL B-441) (Lactobacillus paracasei).